The primary structure comprises 172 residues: Antibacterial protein PR-39 (172 aa).

An N-terminal signal peptide occupies residues 1-29; that stretch reads METQRASLCLGRWSLWLLLLGLVVPSASA. Position 30 is a pyrrolidone carboxylic acid (Gln-30). A propeptide spanning residues 30-130 is cleaved from the precursor; that stretch reads QALSYREAVL…DISCNEIQSV (101 aa). The segment at 61 to 80 is disordered; sequence DQPPKADEDPGTPKPVSFTV. 2 disulfides stabilise this stretch: Cys-85–Cys-96 and Cys-107–Cys-124. The segment at 130 to 172 is disordered; the sequence is VRRRPRPPYLPRPRPPPFFPPRLPPRIPPGFPPRFPPRFPGKR. The segment covering 136–172 has biased composition (pro residues); the sequence is PPYLPRPRPPPFFPPRLPPRIPPGFPPRFPPRFPGKR. Residue Pro-169 is modified to Proline amide.

Belongs to the cathelicidin family. Small intestine and bone marrow.

It localises to the secreted. Functionally, exerts a potent antimicrobial activity against both E.coli and B.megaterium. The polypeptide is Antibacterial protein PR-39 (PR39) (Sus scrofa (Pig)).